The sequence spans 245 residues: Homeobox protein goosecoid (245 aa).

Residues 150–209 constitute a DNA-binding region (homeobox); that stretch reads KRRHRTIFTDEQLEALENLFQETKYPDVGTREQLARKVHLREEKVEVWFKNRRAKWRRQK. The segment at 203 to 245 is disordered; the sequence is AKWRRQKRSSSEESENAQKWNKASKTSPEKRQEDGKSDLDSDS. Over residues 219–228 the composition is skewed to polar residues; that stretch reads AQKWNKASKT. A compositionally biased stretch (basic and acidic residues) spans 229 to 245; that stretch reads SPEKRQEDGKSDLDSDS.

It belongs to the paired homeobox family. Bicoid subfamily.

The protein localises to the nucleus. In terms of biological role, involved in the development of the organizer region in the gastrula (Hensen node in chicken). The polypeptide is Homeobox protein goosecoid (GSC) (Gallus gallus (Chicken)).